Here is a 406-residue protein sequence, read N- to C-terminus: Enoyl-[acyl-carrier-protein] reductase [NADH] (406 aa).

NAD(+) is bound by residues 48 to 53, 74 to 75, 111 to 112, and 140 to 141; these read GASTGF, FE, DA, and IA. Residue tyrosine 226 participates in substrate binding. Tyrosine 236 functions as the Proton donor in the catalytic mechanism. Residues lysine 245 and 275-277 each bind NAD(+); that span reads LVT.

The protein belongs to the TER reductase family. Monomer.

It carries out the reaction a 2,3-saturated acyl-[ACP] + NAD(+) = a (2E)-enoyl-[ACP] + NADH + H(+). Its pathway is lipid metabolism; fatty acid biosynthesis. Its function is as follows. Involved in the final reduction of the elongation cycle of fatty acid synthesis (FAS II). Catalyzes the reduction of a carbon-carbon double bond in an enoyl moiety that is covalently linked to an acyl carrier protein (ACP). This chain is Enoyl-[acyl-carrier-protein] reductase [NADH], found in Coxiella burnetii (strain Dugway 5J108-111).